Consider the following 27-residue polypeptide: Natriuretic peptides A (27 aa).

A disulfide bridge connects residues Cys-7 and Cys-23.

It belongs to the natriuretic peptide family.

Its subcellular location is the secreted. Its function is as follows. Hormone playing a key role in cardiovascular homeostasis through regulation of natriuresis, diuresis, and vasodilation. Has a cGMP-stimulating activity. The protein is Natriuretic peptides A (nppa) of Anguilla japonica (Japanese eel).